The chain runs to 347 residues: Glutamyl-Q tRNA(Asp) synthetase (347 aa).

Residues 31-35 (RFAPS) and Glu-67 each bind L-glutamate. The 'HIGH' region signature appears at 34-44 (PSPTSALHLGN). Cys-121, Cys-123, Tyr-143, and Cys-147 together coordinate Zn(2+). L-glutamate contacts are provided by Tyr-203 and Arg-221. The 'KMSKS' region signature appears at 259–263 (RLSKS). Lys-262 lines the ATP pocket.

It belongs to the class-I aminoacyl-tRNA synthetase family. GluQ subfamily. Zn(2+) serves as cofactor.

Functionally, catalyzes the tRNA-independent activation of glutamate in presence of ATP and the subsequent transfer of glutamate onto a tRNA(Asp). Glutamate is transferred on the 2-amino-5-(4,5-dihydroxy-2-cyclopenten-1-yl) moiety of the queuosine in the wobble position of the QUC anticodon. The polypeptide is Glutamyl-Q tRNA(Asp) synthetase (Cutibacterium acnes (strain DSM 16379 / KPA171202) (Propionibacterium acnes)).